Here is a 112-residue protein sequence, read N- to C-terminus: Small ribosomal subunit protein eS24 (112 aa).

Residues 88–112 (RGMAGEEEGNADAQDAPSGDAAEAS) form a disordered region.

Belongs to the eukaryotic ribosomal protein eS24 family.

In Methanospirillum hungatei JF-1 (strain ATCC 27890 / DSM 864 / NBRC 100397 / JF-1), this protein is Small ribosomal subunit protein eS24.